Consider the following 103-residue polypeptide: MGKLTLLLLALLVWLQYSLWFGKNGIHDYSRVNDDVVAQQATNAKLKARNDQLFAEIDDLNGGQEAIEERARNELSMTKPGETFYRLVPDASKRAATAGQTHR.

Topologically, residues Met1–Lys3 are cytoplasmic. A helical membrane pass occupies residues Leu4–Phe21. The Periplasmic segment spans residues Gly22–Arg103. The stretch at Asn33–Gly62 forms a coiled coil.

This sequence belongs to the FtsB family. In terms of assembly, part of a complex composed of FtsB, FtsL and FtsQ.

It is found in the cell inner membrane. In terms of biological role, essential cell division protein. May link together the upstream cell division proteins, which are predominantly cytoplasmic, with the downstream cell division proteins, which are predominantly periplasmic. The sequence is that of Cell division protein FtsB from Salmonella agona (strain SL483).